The chain runs to 217 residues: MPMPTEERVSQLVAGLVERRGFDLEGVEITRAGSRADAQPRVTVVVDSDGAADLDAVAELSSEMSVVLDDTDIFGDSPYLLEVTTPGVDRPLTAPRHWRRAQGRKVRITLRPGAEPPDPGGSAGFEARVGVLDGEQIALVLGGKRNPHRVRVPLADIERAVVQVEFSPPGARELELAGGVAPGRPDPGTDRAIAADGAISEETSTAAASDPTEGIEE.

Belongs to the RimP family.

It localises to the cytoplasm. Functionally, required for maturation of 30S ribosomal subunits. This chain is Ribosome maturation factor RimP, found in Nocardia farcinica (strain IFM 10152).